The following is a 164-amino-acid chain: Lipoprotein signal peptidase (164 aa).

Helical transmembrane passes span 6–26 (LGIL…LWLL), 39–59 (VTSF…GWFA), 65–85 (GQIL…IWMA), and 88–108 (TTKL…GNAI). Catalysis depends on residues D118 and D140. Residues 141-161 (VAIVVGVVALLYDSLIGAPAV) form a helical membrane-spanning segment.

Belongs to the peptidase A8 family.

Its subcellular location is the cell inner membrane. The enzyme catalyses Release of signal peptides from bacterial membrane prolipoproteins. Hydrolyzes -Xaa-Yaa-Zaa-|-(S,diacylglyceryl)Cys-, in which Xaa is hydrophobic (preferably Leu), and Yaa (Ala or Ser) and Zaa (Gly or Ala) have small, neutral side chains.. The protein operates within protein modification; lipoprotein biosynthesis (signal peptide cleavage). This protein specifically catalyzes the removal of signal peptides from prolipoproteins. The protein is Lipoprotein signal peptidase of Rhodopseudomonas palustris (strain TIE-1).